Here is a 346-residue protein sequence, read N- to C-terminus: Probable RNA methyltransferase PA1839 (346 aa).

Catalysis depends on Glu91, which acts as the Proton acceptor. The Radical SAM core domain maps to 94 to 320 (LLPRGGLCVS…TKVRNSAGQD (227 aa)). Cys101 and Cys325 are disulfide-bonded. [4Fe-4S] cluster contacts are provided by Cys108, Cys112, and Cys115. Residues 153 to 154 (GE), Ser183, 206 to 208 (SLH), and Asn282 contribute to the S-adenosyl-L-methionine site. Residue Cys325 is the S-methylcysteine intermediate of the active site.

The protein belongs to the radical SAM superfamily. RlmN family. The cofactor is [4Fe-4S] cluster.

It localises to the cytoplasm. This Pseudomonas aeruginosa (strain ATCC 15692 / DSM 22644 / CIP 104116 / JCM 14847 / LMG 12228 / 1C / PRS 101 / PAO1) protein is Probable RNA methyltransferase PA1839.